A 1235-amino-acid polypeptide reads, in one-letter code: STE20-like serine/threonine-protein kinase (1235 aa).

Ser14 is modified (phosphoserine). The Protein kinase domain maps to 34-292 (WEIIGELGDG…TSQLLQHPFV (259 aa)). Residues 40–48 (LGDGAFGKV) and Lys63 each bind ATP. Asp155 (proton acceptor) is an active-site residue. Phosphothreonine is present on Thr183. Ser189 bears the Phosphoserine mark. The disordered stretch occupies residues 309 to 351 (AEVTEEVEDGKEEDEEEETENSLPIPASKRASSDLSIASSEED). Positions 312–328 (TEEVEDGKEEDEEEETE) are enriched in acidic residues. Residues Ser330, Ser340, Ser341, Ser344, Ser347, Ser348, Ser354, and Ser372 each carry the phosphoserine modification. 2 disordered regions span residues 363–393 (VSEKTERSNSEDKLNSKILNEKPTTDEPEKA) and 421–441 (ENEREKRPKLENLPDTEDQET). The span at 421-432 (ENEREKRPKLEN) shows a compositional bias: basic and acidic residues. Ser518 bears the Phosphoserine mark. A disordered region spans residues 519 to 539 (EVGLTKEDTQEKLGEDDKTQK). Over residues 522–539 (LTKEDTQEKLGEDDKTQK) the composition is skewed to basic and acidic residues. Residue Ser565 is modified to Phosphoserine. Thr569 carries the post-translational modification Phosphothreonine. Phosphoserine is present on residues Ser571, Ser647, Ser655, and Ser667. The tract at residues 613–760 (EGKNKEQAIN…GTGSTADTSS (148 aa)) is disordered. Acidic residues predominate over residues 638 to 650 (EGEEITESSSTEE). Residues 679–695 (IDKEKKEIPVSIKKEPE) are compositionally biased toward basic and acidic residues. A compositionally biased stretch (low complexity) spans 749 to 760 (DSGTGSTADTSS). Residues Ser777 and Ser779 each carry the phosphoserine modification. Phosphothreonine is present on Thr814. Ser818 bears the Phosphoserine mark. Positions 826–1069 (LRRQELRELR…LKNRQTQERA (244 aa)) form a coiled coil. One can recognise a UVR domain in the interval 875–910 (DQEIENLEKQQKQTIERLEQEHTNRLRDEAKRIKGE). Thr1097 carries the post-translational modification Phosphothreonine. A coiled-coil region spans residues 1109–1183 (AAQEEKRQKN…ELKEWREKLR (75 aa)).

The protein belongs to the protein kinase superfamily. STE Ser/Thr protein kinase family. STE20 subfamily. Post-translationally, proteolytically cleaved by caspase-3. Autophosphorylated. Ubiquitously expressed. Highest expression is found in heart and in skeletal muscle.

The protein resides in the cytoplasm. It carries out the reaction L-seryl-[protein] + ATP = O-phospho-L-seryl-[protein] + ADP + H(+). It catalyses the reaction L-threonyl-[protein] + ATP = O-phospho-L-threonyl-[protein] + ADP + H(+). Mediates apoptosis and actin stress fiber dissolution. This is STE20-like serine/threonine-protein kinase (SLK) from Homo sapiens (Human).